A 96-amino-acid chain; its full sequence is MKCFAQIVVLLLVIAFSHGAVITGVCDRDAQCGSGTCCAASAFSRNIRFCVPLGNNGEECHPASHKVPSDGKRLSSLCPCNTGLTCSKSGEKYQCS.

The signal sequence occupies residues 1-19; that stretch reads MKCFAQIVVLLLVIAFSHG. 5 disulfides stabilise this stretch: Cys26-Cys38, Cys32-Cys50, Cys37-Cys78, Cys60-Cys86, and Cys80-Cys95.

Belongs to the AVIT (prokineticin) family. In terms of tissue distribution, expressed by the skin glands.

Its subcellular location is the secreted. Functionally, potent agonist for both PKR1/PROKR1 and PKR2/PROKR2, and inducer of a potent and long-lasting hyperalgesia. Also potentiates capsaicin-induced TRPV1 current, when tested on DRG neurons. At subnanomolar concentrations, this protein both induces potent chemotaxis of macrophages and stimulates LPS-induced production of the pro-inflammatory cytokines IL-1 and IL-12. In vivo, potently stimulates the contraction of the guinea-pig gastrointestinal (GI) smooth muscle (nanomolar concentration). In Bombina maxima (Giant fire-bellied toad), this protein is Prokineticin Bm8-f.